The primary structure comprises 324 residues: MSAVLPSSASLYDRVRRVIPPIEWSVFVEDIDAILNLKRQRNAVILAHNYQTPEIFHCVADIVGDSLALARKAMTVDAEIIVLAGVHFMAETAKLLNPDKTVLIPDLGAGCSLAESITAEDVRLMRQRYPSVPVVTYVNTSAAVKAESDICCTSGNALAVVKSLGAPRVIMLPDEYLAKNIAAQTKVEIIAWKGRCEVHERFTAADIRELREAHPGISVLAHPECPPEVVAEADFAGSTAAMSDYVARHRPARVVLMTECSMSDNVAVEHPEVDFVRPCNLCPHMKRITLANIRTALEENRHVVTIDPHVAERARWAVERMLFV.

Residues His-48 and Ser-66 each contribute to the iminosuccinate site. A [4Fe-4S] cluster-binding site is contributed by Cys-111. Residues 137–139 (YVN) and Ser-154 each bind iminosuccinate. [4Fe-4S] cluster is bound at residue Cys-196. Iminosuccinate contacts are provided by residues 222–224 (HPE) and Thr-239. Cys-282 is a binding site for [4Fe-4S] cluster.

It belongs to the quinolinate synthase family. Type 2 subfamily. The cofactor is [4Fe-4S] cluster.

It is found in the cytoplasm. It carries out the reaction iminosuccinate + dihydroxyacetone phosphate = quinolinate + phosphate + 2 H2O + H(+). The protein operates within cofactor biosynthesis; NAD(+) biosynthesis; quinolinate from iminoaspartate: step 1/1. Catalyzes the condensation of iminoaspartate with dihydroxyacetone phosphate to form quinolinate. This is Quinolinate synthase 1 from Mesorhizobium japonicum (strain LMG 29417 / CECT 9101 / MAFF 303099) (Mesorhizobium loti (strain MAFF 303099)).